Reading from the N-terminus, the 341-residue chain is MRVLGIESSCDETGVAVYDTDLAGSAALRAHAVYSQIALHAEYGGVVPELASRDHVRKLLPLVRQTLAEAGLGVGDIDGVAYTAGPGLVGALLVGAGVARSLAWALEVPAVGVHHMEGHLLAPLMEDDPPQAPFVALLVSGGHTQLVAVDAIGQYRLLGETLDDAAGEAFDKTAKMMGLPYPGGPQLARLAEQGTPGVYRFARPMIDRPGLDFSFSGLKTQVLMAWRDSDQSEQTRADIARGFEDAVVETLSIKCERALEAAGTNVIVVAGGVGANKRLRARLQQMAERLGGRACFPRPALCTDNGAMIAFAGALRLQAGQHSPPKVDVTPRWDMATLPAV.

Fe cation is bound by residues histidine 115 and histidine 119. Residues 138-142 (LVSGG), aspartate 171, glycine 184, and asparagine 276 contribute to the substrate site. Aspartate 304 serves as a coordination point for Fe cation.

Belongs to the KAE1 / TsaD family. Requires Fe(2+) as cofactor.

It is found in the cytoplasm. The catalysed reaction is L-threonylcarbamoyladenylate + adenosine(37) in tRNA = N(6)-L-threonylcarbamoyladenosine(37) in tRNA + AMP + H(+). Functionally, required for the formation of a threonylcarbamoyl group on adenosine at position 37 (t(6)A37) in tRNAs that read codons beginning with adenine. Is involved in the transfer of the threonylcarbamoyl moiety of threonylcarbamoyl-AMP (TC-AMP) to the N6 group of A37, together with TsaE and TsaB. TsaD likely plays a direct catalytic role in this reaction. In Stenotrophomonas maltophilia (strain R551-3), this protein is tRNA N6-adenosine threonylcarbamoyltransferase.